A 258-amino-acid chain; its full sequence is Isoprenyl transferase 2 (258 aa).

The span at methionine 1 to leucine 18 shows a compositional bias: pro residues. The disordered stretch occupies residues methionine 1–glutamine 21. Aspartate 32 is an active-site residue. Residue aspartate 32 coordinates Mg(2+). Residues glycine 33–arginine 36, tryptophan 37, arginine 45, histidine 49, and serine 77–glutamate 79 each bind substrate. Catalysis depends on asparagine 80, which acts as the Proton acceptor. Substrate contacts are provided by residues tryptophan 81, arginine 83, arginine 200, and arginine 206–serine 208. A Mg(2+)-binding site is contributed by glutamate 219.

This sequence belongs to the UPP synthase family. As to quaternary structure, homodimer. Requires Mg(2+) as cofactor.

Functionally, catalyzes the condensation of isopentenyl diphosphate (IPP) with allylic pyrophosphates generating different type of terpenoids. This chain is Isoprenyl transferase 2, found in Nostoc sp. (strain PCC 7120 / SAG 25.82 / UTEX 2576).